The sequence spans 114 residues: Small ribosomal subunit protein bS6 (114 aa).

This sequence belongs to the bacterial ribosomal protein bS6 family.

Binds together with bS18 to 16S ribosomal RNA. In Phocaeicola vulgatus (strain ATCC 8482 / DSM 1447 / JCM 5826 / CCUG 4940 / NBRC 14291 / NCTC 11154) (Bacteroides vulgatus), this protein is Small ribosomal subunit protein bS6.